Consider the following 197-residue polypeptide: Recombination protein RecR (197 aa).

A C4-type zinc finger spans residues 56-71 (CNVCFHFSADPICEIC). The 95-residue stretch at 79–173 (QTICVVADSR…KVTRIAFGLP (95 aa)) folds into the Toprim domain.

It belongs to the RecR family.

Its function is as follows. May play a role in DNA repair. It seems to be involved in an RecBC-independent recombinational process of DNA repair. It may act with RecF and RecO. This is Recombination protein RecR from Rippkaea orientalis (strain PCC 8801 / RF-1) (Cyanothece sp. (strain PCC 8801)).